Consider the following 129-residue polypeptide: Glycine cleavage system H protein (129 aa).

The region spanning 24-106 (TYTVGITEHA…YTDGWIFKIR (83 aa)) is the Lipoyl-binding domain. Lys65 carries the post-translational modification N6-lipoyllysine.

The protein belongs to the GcvH family. In terms of assembly, the glycine cleavage system is composed of four proteins: P, T, L and H. (R)-lipoate is required as a cofactor.

Functionally, the glycine cleavage system catalyzes the degradation of glycine. The H protein shuttles the methylamine group of glycine from the P protein to the T protein. This chain is Glycine cleavage system H protein, found in Enterobacter sp. (strain 638).